The sequence spans 603 residues: Probable potassium transport system protein Kup (603 aa).

Helical transmembrane passes span 15-35 (GLVF…IFLL), 43-63 (VIGV…VEYA), 94-114 (AAFI…DGVI), 136-156 (IGQG…FSVQ), 163-183 (ITWV…FSGI), 201-221 (AISF…EVIL), 244-264 (AWRL…AFII), 284-304 (IYIP…QAMI), 336-356 (IYIG…IFEF), 367-387 (GLAV…IFYL), 391-411 (MFRS…LLSN), and 415-435 (IPHG…LIII).

This sequence belongs to the HAK/KUP transporter (TC 2.A.72) family.

Its subcellular location is the cell membrane. It catalyses the reaction K(+)(in) + H(+)(in) = K(+)(out) + H(+)(out). Transport of potassium into the cell. Likely operates as a K(+):H(+) symporter. The sequence is that of Probable potassium transport system protein Kup from Methanosarcina acetivorans (strain ATCC 35395 / DSM 2834 / JCM 12185 / C2A).